Reading from the N-terminus, the 716-residue chain is Eosinophil peroxidase (716 aa).

A signal peptide spans 1–18 (MMQQLLALVGALATLILT). A propeptide spanning residues 19 to 140 (QHAEGTAPAS…SGCALQDQAE (122 aa)) is cleaved from the precursor. Residues N53 and N114 are each glycosylated (N-linked (GlcNAc...) asparagine). A disulfide bridge links C142 with C153. D233 contributes to the heme b binding site. H234 acts as the Proton acceptor in catalysis. Residue D235 coordinates Ca(2+). 2 disulfide bridges follow: C254–C264 and C258–C282. The Ca(2+) site is built by T307, F309, D311, and S313. N-linked (GlcNAc...) asparagine glycans are attached at residues N328 and N364. Cysteines 360 and 371 form a disulfide. Residues E381 and H475 each contribute to the heme b site. Residue Y489 is modified to 3'-nitrotyrosine. 2 disulfide bridges follow: C579-C636 and C677-C702. Residue N709 is glycosylated (N-linked (GlcNAc...) asparagine).

The protein belongs to the peroxidase family. XPO subfamily. As to quaternary structure, tetramer of two light chains and two heavy chains. It depends on Ca(2+) as a cofactor. Heme b serves as cofactor.

The protein resides in the cytoplasmic granule. It carries out the reaction 2 a phenolic donor + H2O2 = 2 a phenolic radical donor + 2 H2O. Its function is as follows. Mediates tyrosine nitration of secondary granule proteins in mature resting eosinophils. In Mus musculus (Mouse), this protein is Eosinophil peroxidase (Epx).